Reading from the N-terminus, the 1936-residue chain is Potassium channel K1 (1936 aa).

6 helical membrane-spanning segments follow: residues 175–195 (IIIL…YILL), 598–618 (VWII…LWAA), 643–663 (GYIE…GLYF), 670–690 (YIFS…SFIM), 701–721 (TYWF…AEST), and 734–754 (IIII…SGIM). The segment at residues 772–788 (FVYFGVITMSTVGYGDY) is an intramembrane region (pore-forming). Residues 791-811 (VTPAGKCLTMFIIVTCFTFVG) traverse the membrane as a helical segment. Residues 1141-1185 (DTSSMINYKSKSRVNYKMVKGTKNEFIRNQNYNINSIYYANNDNM) adopt a coiled-coil conformation.

Its subcellular location is the membrane. The catalysed reaction is K(+)(in) = K(+)(out). With respect to regulation, partially inhibited by Ba(2+) and quinine. Probably insensitive to tetraethylammonium (TEA). Its function is as follows. Likely a predominant potassium channel in the erythrocytic stages of parasites. Mediates transmembrane potassium transport. Required for the development of oocysts in the mosquito midgut. This chain is Potassium channel K1, found in Plasmodium berghei (strain Anka).